Reading from the N-terminus, the 355-residue chain is 3-dehydroquinate synthase (355 aa).

NAD(+) is bound by residues 98–102 (GVIGD), 122–123 (TT), Lys-135, Lys-144, and 162–165 (TLNT). Zn(2+) contacts are provided by Glu-177, His-240, and His-257.

This sequence belongs to the sugar phosphate cyclases superfamily. Dehydroquinate synthase family. It depends on Co(2+) as a cofactor. Requires Zn(2+) as cofactor. The cofactor is NAD(+).

The protein localises to the cytoplasm. The enzyme catalyses 7-phospho-2-dehydro-3-deoxy-D-arabino-heptonate = 3-dehydroquinate + phosphate. It participates in metabolic intermediate biosynthesis; chorismate biosynthesis; chorismate from D-erythrose 4-phosphate and phosphoenolpyruvate: step 2/7. In terms of biological role, catalyzes the conversion of 3-deoxy-D-arabino-heptulosonate 7-phosphate (DAHP) to dehydroquinate (DHQ). In Dictyoglomus thermophilum (strain ATCC 35947 / DSM 3960 / H-6-12), this protein is 3-dehydroquinate synthase.